Reading from the N-terminus, the 456-residue chain is Arginine biosynthesis bifunctional protein ArgJ, mitochondrial (456 aa).

Residues T184, K213, T224, E311, N451, and T456 each coordinate substrate. The active-site Nucleophile is T224.

It belongs to the ArgJ family. In terms of assembly, heterodimer of an alpha and a beta chain. Post-translationally, the alpha and beta chains are autoproteolytically processed from a single precursor protein within the mitochondrion.

It is found in the mitochondrion matrix. It catalyses the reaction N(2)-acetyl-L-ornithine + L-glutamate = N-acetyl-L-glutamate + L-ornithine. It carries out the reaction L-glutamate + acetyl-CoA = N-acetyl-L-glutamate + CoA + H(+). Its pathway is amino-acid biosynthesis; L-arginine biosynthesis; L-ornithine and N-acetyl-L-glutamate from L-glutamate and N(2)-acetyl-L-ornithine (cyclic): step 1/1. The protein operates within amino-acid biosynthesis; L-arginine biosynthesis; N(2)-acetyl-L-ornithine from L-glutamate: step 1/4. Catalyzes two activities which are involved in the cyclic version of arginine biosynthesis: the synthesis of acetylglutamate from glutamate and acetyl-CoA, and of ornithine by transacetylation between acetylornithine and glutamate. The protein is Arginine biosynthesis bifunctional protein ArgJ, mitochondrial of Neosartorya fischeri (strain ATCC 1020 / DSM 3700 / CBS 544.65 / FGSC A1164 / JCM 1740 / NRRL 181 / WB 181) (Aspergillus fischerianus).